We begin with the raw amino-acid sequence, 101 residues long: Citrate lyase acyl carrier protein (101 aa).

Ser-14 is modified (O-(phosphoribosyl dephospho-coenzyme A)serine).

The protein belongs to the CitD family. Oligomer with a subunit composition of (alpha,beta,gamma)6.

The protein localises to the cytoplasm. Functionally, covalent carrier of the coenzyme of citrate lyase. This Clostridium perfringens (strain 13 / Type A) protein is Citrate lyase acyl carrier protein.